The primary structure comprises 534 residues: CTP synthase (534 aa).

The amidoligase domain stretch occupies residues 1–266 (MKTKFLFITG…DERIIDYLNI (266 aa)). Ser14 is a binding site for CTP. A UTP-binding site is contributed by Ser14. ATP-binding positions include 15 to 20 (SLGKGL) and Asp72. Mg(2+) is bound by residues Asp72 and Glu140. Residues 147 to 149 (DIE), 187 to 192 (KTKPTQ), and Lys223 contribute to the CTP site. UTP contacts are provided by residues 187 to 192 (KTKPTQ) and Lys223. Position 239-241 (239-241 (RDV)) interacts with ATP. A Glutamine amidotransferase type-1 domain is found at 291–533 (TIAIVGKYVE…VGASLKHHGE (243 aa)). Gly353 is a binding site for L-glutamine. The Nucleophile; for glutamine hydrolysis role is filled by Cys380. Residues 381-384 (LGMQ), Glu404, and Arg461 each bind L-glutamine. Catalysis depends on residues His506 and Glu508.

This sequence belongs to the CTP synthase family. In terms of assembly, homotetramer.

The catalysed reaction is UTP + L-glutamine + ATP + H2O = CTP + L-glutamate + ADP + phosphate + 2 H(+). It carries out the reaction L-glutamine + H2O = L-glutamate + NH4(+). The enzyme catalyses UTP + NH4(+) + ATP = CTP + ADP + phosphate + 2 H(+). The protein operates within pyrimidine metabolism; CTP biosynthesis via de novo pathway; CTP from UDP: step 2/2. Its activity is regulated as follows. Allosterically activated by GTP, when glutamine is the substrate; GTP has no effect on the reaction when ammonia is the substrate. The allosteric effector GTP functions by stabilizing the protein conformation that binds the tetrahedral intermediate(s) formed during glutamine hydrolysis. Inhibited by the product CTP, via allosteric rather than competitive inhibition. Functionally, catalyzes the ATP-dependent amination of UTP to CTP with either L-glutamine or ammonia as the source of nitrogen. Regulates intracellular CTP levels through interactions with the four ribonucleotide triphosphates. The sequence is that of CTP synthase from Syntrophotalea carbinolica (strain DSM 2380 / NBRC 103641 / GraBd1) (Pelobacter carbinolicus).